The chain runs to 196 residues: Nucleoid occlusion factor SlmA (196 aa).

The HTH tetR-type domain maps to 7–68 (SNRREEILQA…GLIEFIEEAL (62 aa)). The H-T-H motif DNA-binding region spans 31-50 (TTAKLAQQVGVSEAALYRHF). Positions 65–142 (EEALMSRINR…QLRQILRERK (78 aa)) form a coiled coil.

It belongs to the nucleoid occlusion factor SlmA family. As to quaternary structure, homodimer. Interacts with FtsZ.

It is found in the cytoplasm. The protein resides in the nucleoid. In terms of biological role, required for nucleoid occlusion (NO) phenomenon, which prevents Z-ring formation and cell division over the nucleoid. Acts as a DNA-associated cell division inhibitor that binds simultaneously chromosomal DNA and FtsZ, and disrupts the assembly of FtsZ polymers. SlmA-DNA-binding sequences (SBS) are dispersed on non-Ter regions of the chromosome, preventing FtsZ polymerization at these regions. The polypeptide is Nucleoid occlusion factor SlmA (Vibrio vulnificus (strain CMCP6)).